Here is a 301-residue protein sequence, read N- to C-terminus: Putative hydro-lyase C5H10.01 (301 aa).

It belongs to the D-glutamate cyclase family.

In Schizosaccharomyces pombe (strain 972 / ATCC 24843) (Fission yeast), this protein is Putative hydro-lyase C5H10.01.